The primary structure comprises 320 residues: Cell-cell adhesion glycoprotein 64 (320 aa).

An N-terminal signal peptide occupies residues 1–19 (MNKFITLFVLLASVSVAMS). Cystine bridges form between Cys39–Cys57, Cys67–Cys79, Cys73–Cys86, Cys98–Cys110, Cys104–Cys115, Cys123–Cys138, Cys132–Cys147, Cys157–Cys171, and Cys165–Cys176. N-linked (GlcNAc...) asparagine glycosylation is present at Asn49. An N-linked (GlcNAc...) asparagine glycan is attached at Asn80. Residues Asn141 and Asn158 are each glycosylated (N-linked (GlcNAc...) asparagine). Asn187 is a glycosylation site (N-linked (GlcNAc...) asparagine). 2 cysteine pairs are disulfide-bonded: Cys188–Cys202 and Cys194–Cys207. Asn216 carries N-linked (GlcNAc...) asparagine glycosylation. Intrachain disulfides connect Cys226/Cys246, Cys232/Cys234, Cys266/Cys285, and Cys270/Cys281. Residue Ser298 is the site of GPI-like-anchor amidated serine attachment. A propeptide spans 299–320 (SATTIAFNAFVVFAIVLSVLLF) (removed in mature form).

Contains 18 disulfide bonds. In terms of processing, the GPI-like-anchor contains a phosphoceramide group, rather than a phosphatidyl group.

It is found in the cell membrane. Functionally, cell-cell adhesion during development. This chain is Cell-cell adhesion glycoprotein 64, found in Heterostelium pallidum (Cellular slime mold).